A 318-amino-acid polypeptide reads, in one-letter code: Ribose-phosphate pyrophosphokinase (318 aa).

ATP-binding positions include 40–42 (DGE) and 99–100 (RQ). 2 residues coordinate Mg(2+): histidine 134 and aspartate 173. Lysine 196 is a catalytic residue. Residues arginine 198, aspartate 222, and 226-230 (DTAGT) each bind D-ribose 5-phosphate.

Belongs to the ribose-phosphate pyrophosphokinase family. Class I subfamily. As to quaternary structure, homohexamer. Mg(2+) is required as a cofactor.

The protein localises to the cytoplasm. It carries out the reaction D-ribose 5-phosphate + ATP = 5-phospho-alpha-D-ribose 1-diphosphate + AMP + H(+). The protein operates within metabolic intermediate biosynthesis; 5-phospho-alpha-D-ribose 1-diphosphate biosynthesis; 5-phospho-alpha-D-ribose 1-diphosphate from D-ribose 5-phosphate (route I): step 1/1. Its function is as follows. Involved in the biosynthesis of the central metabolite phospho-alpha-D-ribosyl-1-pyrophosphate (PRPP) via the transfer of pyrophosphoryl group from ATP to 1-hydroxyl of ribose-5-phosphate (Rib-5-P). This Burkholderia pseudomallei (strain K96243) protein is Ribose-phosphate pyrophosphokinase.